We begin with the raw amino-acid sequence, 470 residues long: 6-phospho-beta-glucosidase BglB (470 aa).

Glu-172 (proton donor) is an active-site residue. Catalysis depends on Glu-361, which acts as the Nucleophile.

This sequence belongs to the glycosyl hydrolase 1 family.

The catalysed reaction is 6-phospho-beta-D-glucosyl-(1-&gt;4)-D-glucose + H2O = D-glucose 6-phosphate + D-glucose. Catalyzes the hydrolysis of phosphorylated beta-glucosides into glucose-6-phosphate (G-6-P) and aglycone. It has a high affinity for phosphorylated aromatic beta-glucosides (p-nitrophenyl-beta-glucoside, phenyl beta-glucoside, arbutin and phosphorylated salicin), and a low affinity for phosphorylated beta-methyl-glucoside. This is 6-phospho-beta-glucosidase BglB (bglB) from Escherichia coli (strain K12).